The sequence spans 174 residues: Ribosome maturation factor RimM (174 aa).

The PRC barrel domain occupies 96–169 (EPDTYYDHQL…ILEIDPPDGL (74 aa)).

The protein belongs to the RimM family. Binds ribosomal protein uS19.

It localises to the cytoplasm. Its function is as follows. An accessory protein needed during the final step in the assembly of 30S ribosomal subunit, possibly for assembly of the head region. Essential for efficient processing of 16S rRNA. May be needed both before and after RbfA during the maturation of 16S rRNA. It has affinity for free ribosomal 30S subunits but not for 70S ribosomes. The polypeptide is Ribosome maturation factor RimM (Mycobacterium marinum (strain ATCC BAA-535 / M)).